Here is a 277-residue protein sequence, read N- to C-terminus: 14-3-3 protein (277 aa).

The disordered stretch occupies residues 252-277 (LQTQEQQQQPVGEGAEAPKVEATEQQ). The span at 267–277 (EAPKVEATEQQ) shows a compositional bias: basic and acidic residues.

It belongs to the 14-3-3 family.

The sequence is that of 14-3-3 protein from Eimeria tenella (Coccidian parasite).